We begin with the raw amino-acid sequence, 179 residues long: Large ribosomal subunit protein bL9 (179 aa).

It belongs to the bacterial ribosomal protein bL9 family.

Functionally, binds to the 23S rRNA. In Bartonella bacilliformis (strain ATCC 35685 / KC583 / Herrer 020/F12,63), this protein is Large ribosomal subunit protein bL9.